Here is a 250-residue protein sequence, read N- to C-terminus: Phosphoribosylaminoimidazole-succinocarboxamide synthase (250 aa).

This sequence belongs to the SAICAR synthetase family.

The enzyme catalyses 5-amino-1-(5-phospho-D-ribosyl)imidazole-4-carboxylate + L-aspartate + ATP = (2S)-2-[5-amino-1-(5-phospho-beta-D-ribosyl)imidazole-4-carboxamido]succinate + ADP + phosphate + 2 H(+). It functions in the pathway purine metabolism; IMP biosynthesis via de novo pathway; 5-amino-1-(5-phospho-D-ribosyl)imidazole-4-carboxamide from 5-amino-1-(5-phospho-D-ribosyl)imidazole-4-carboxylate: step 1/2. The sequence is that of Phosphoribosylaminoimidazole-succinocarboxamide synthase from Bifidobacterium longum subsp. infantis (strain ATCC 15697 / DSM 20088 / JCM 1222 / NCTC 11817 / S12).